The primary structure comprises 568 residues: Protein AF-9 (568 aa).

Positions 1-138 constitute a YEATS domain; the sequence is MASSCAVQVK…EDFRRKLLKA (138 aa). 2 histone H3K9cr binding regions span residues 78 to 80 and 106 to 108; these read YAG and LHL. A disordered region spans residues 138–475; that stretch reads AGGDPNRSIH…PPPPLLKTNN (338 aa). The segment covering 149 to 190 has biased composition (low complexity); it reads SSSSSSSSSSSSSSSSSSSSSSSSSSSSSSSSSSSSSSSSSS. A compositionally biased stretch (basic and acidic residues) spans 202-265; that stretch reads EHKEKPSKDS…PKPMSKEPKP (64 aa). Phosphoserine is present on residues S288 and S294. The Nuclear localization signal signature appears at 295–300; the sequence is AKKRKK. Low complexity predominate over residues 303 to 313; it reads SEALFKSFSSA. Basic and acidic residues predominate over residues 322-349; that stretch reads ADKKQIKDKSHVKMGKVKIESETSEKKK. Residue K339 forms a Glycyl lysine isopeptide (Lys-Gly) (interchain with G-Cter in SUMO2) linkage. Over residues 357–368 the composition is skewed to acidic residues; it reads DIVDPNDSDVEE. The segment covering 371–395 has biased composition (low complexity); that stretch reads SSKSDSEQPSPASSSSSSSSSFTPS. Phosphoserine occurs at positions 412 and 419. Residues 414 to 429 show a composition bias toward acidic residues; sequence DNEEESDEVEDNDNDS. Over residues 445-461 the composition is skewed to low complexity; the sequence is VSLSDGSDSESSSASSP. At S483 the chain carries Phosphoserine.

In terms of assembly, component of the super elongation complex (SEC), at least composed of EAF1, EAF2, CDK9, MLLT3/AF9, AFF (AFF1 or AFF4), the P-TEFb complex and ELL (ELL, ELL2 or ELL3). Interacts with BCOR. Interacts with CBX8. Interacts with ALKBH4. As to expression, enriched in undifferentiated hematopoietic stem cells in fetal liver, cord blood and bone marrow.

The protein resides in the nucleus. It localises to the chromosome. With respect to regulation, crotonylated lysine binding is strongly inhibited by the peptide XL-07i, carrying a 2-furancarbonyl side chain and capped with a hydrophobic carboxybenzyl group. XL-07i targets the unique pi-pi-pi stacking interaction at the crotonylation recognition site. Functionally, chromatin reader component of the super elongation complex (SEC), a complex required to increase the catalytic rate of RNA polymerase II transcription by suppressing transient pausing by the polymerase at multiple sites along the DNA. Specifically recognizes and binds acylated histone H3, with a preference for histone H3 that is crotonylated. Crotonylation marks active promoters and enhancers and confers resistance to transcriptional repressors. Recognizes and binds histone H3 crotonylated at 'Lys-9' (H3K9cr), and with slightly lower affinity histone H3 crotonylated at 'Lys-18' (H3K18cr). Also recognizes and binds histone H3 acetylated and butyrylated at 'Lys-9' (H3K9ac and H3K9bu, respectively), but with lower affinity than crotonylated histone H3. In the SEC complex, MLLT3 is required to recruit the complex to crotonylated histones. Recruitment of the SEC complex to crotonylated histones promotes recruitment of DOT1L on active chromatin to deposit histone H3 'Lys-79' methylation (H3K79me). Plays a key role in hematopoietic stem cell (HSC) maintenance by preserving, rather than conferring, HSC stemness. Acts by binding to the transcription start site of active genes in HSCs and sustaining level of H3K79me2, probably by recruiting DOT1L. This chain is Protein AF-9, found in Homo sapiens (Human).